Consider the following 78-residue polypeptide: Short neurotoxin SNTX14 (78 aa).

Positions 1–21 are cleaved as a signal peptide; sequence MKTLLLTFLVVTIVCLDLGYT. Cystine bridges form between Cys-24-Cys-40, Cys-33-Cys-58, Cys-62-Cys-70, and Cys-71-Cys-76.

This sequence belongs to the three-finger toxin family. Short-chain subfamily. As to expression, expressed by the venom gland.

The protein localises to the secreted. Functionally, this three-finger toxin binds and inhibits the nicotinic acetylcholine receptor (nAChR). The protein is Short neurotoxin SNTX14 of Ophiophagus hannah (King cobra).